Reading from the N-terminus, the 413-residue chain is Elongation factor 1-alpha (413 aa).

A tr-type G domain is found at Lys5 to Val211. The segment at Gly14–Ser21 is G1. Gly14–Ser21 provides a ligand contact to GTP. Ser21 contributes to the Mg(2+) binding site. The segment at Gly60–Asp64 is G2. The G3 stretch occupies residues Asp81–Gly84. Residues Asp81 to His85 and Asn136 to Asp139 each bind GTP. The tract at residues Asn136–Asp139 is G4. A G5 region spans residues Ser175–Phe177.

It belongs to the TRAFAC class translation factor GTPase superfamily. Classic translation factor GTPase family. EF-Tu/EF-1A subfamily.

It is found in the cytoplasm. It catalyses the reaction GTP + H2O = GDP + phosphate + H(+). GTP hydrolase that promotes the GTP-dependent binding of aminoacyl-tRNA to the A-site of ribosomes during protein biosynthesis. In Methanothermobacter thermautotrophicus (strain ATCC 29096 / DSM 1053 / JCM 10044 / NBRC 100330 / Delta H) (Methanobacterium thermoautotrophicum), this protein is Elongation factor 1-alpha.